The primary structure comprises 601 residues: Mitochondrial tRNA methylthiotransferase CDK5RAP1 (601 aa).

The N-terminal 33 residues, M1 to H33, are a transit peptide targeting the mitochondrion. Residues R100–S220 enclose the MTTase N-terminal domain. The [4Fe-4S] cluster site is built by C109, C145, C183, C258, C262, and C265. The region spanning S244–K512 is the Radical SAM core domain. The TRAM domain maps to Q515–C590.

The protein belongs to the methylthiotransferase family. MiaB subfamily. As to quaternary structure, interacts with CDK5R1 (p35 form). CDK5RAP1, CDK5RAP2 and CDK5RAP3 show competitive binding to CDK5R1. Forms a complex with CDK5R1 and CDK5. The cofactor is [4Fe-4S] cluster. In terms of tissue distribution, expressed in heart, brain, placenta, lung, liver, skeletal muscle, kidney and pancreas. Expressed in neurons of central nervous tissue. As to expression, mainly expressed in brain, placenta and testis. High expression in placenta and lung.

The protein localises to the mitochondrion. The catalysed reaction is N(6)-dimethylallyladenosine(37) in tRNA + (sulfur carrier)-SH + AH2 + 2 S-adenosyl-L-methionine = 2-methylsulfanyl-N(6)-dimethylallyladenosine(37) in tRNA + (sulfur carrier)-H + 5'-deoxyadenosine + L-methionine + A + S-adenosyl-L-homocysteine + 2 H(+). Methylthiotransferase that catalyzes the conversion of N6-(dimethylallyl)adenosine (i(6)A) to 2-methylthio-N6-(dimethylallyl)adenosine (ms(2)i(6)A) at position 37 (adjacent to the 3'-end of the anticodon) of four mitochondrial DNA-encoded tRNAs (Ser(UCN), Phe, Tyr and Trp). Essential for efficient and highly accurate protein translation by the ribosome. Specifically inhibits CDK5 activation by CDK5R1. Essential for efficient mitochondrial protein synthesis and respiratory chain; shows pathological consequences in mitochondrial disease. The protein is Mitochondrial tRNA methylthiotransferase CDK5RAP1 of Homo sapiens (Human).